Reading from the N-terminus, the 72-residue chain is MAKDGVIEVEGQVVEALPNAMFRVELENKHIVLATISGKMRKNYIRILPQDRVVLEMSPYDLNRGRITYRYK.

In terms of domain architecture, S1-like spans 1–72 (MAKDGVIEVE…NRGRITYRYK (72 aa)).

It belongs to the IF-1 family. Component of the 30S ribosomal translation pre-initiation complex which assembles on the 30S ribosome in the order IF-2 and IF-3, IF-1 and N-formylmethionyl-tRNA(fMet); mRNA recruitment can occur at any time during PIC assembly.

It is found in the cytoplasm. In terms of biological role, one of the essential components for the initiation of protein synthesis. Stabilizes the binding of IF-2 and IF-3 on the 30S subunit to which N-formylmethionyl-tRNA(fMet) subsequently binds. Helps modulate mRNA selection, yielding the 30S pre-initiation complex (PIC). Upon addition of the 50S ribosomal subunit IF-1, IF-2 and IF-3 are released leaving the mature 70S translation initiation complex. The polypeptide is Translation initiation factor IF-1 (Bifidobacterium adolescentis (strain ATCC 15703 / DSM 20083 / NCTC 11814 / E194a)).